The primary structure comprises 302 residues: Putative peptide permease protein BOV_A0350 (302 aa).

Residues 1–22 (MRSSIHASRLRKMGQSIPASTG) are disordered. The next 6 membrane-spanning stretches (helical) occupy residues 38-58 (IFGL…PLWL), 101-121 (LLVA…IGAI), 147-167 (IFLL…VVVI), 200-222 (AGLG…VVYA), 230-250 (ILLE…AASW), and 268-288 (WQWL…NFIG). The ABC transmembrane type-1 domain maps to 97 to 288 (GRISLLVAVS…LAVLAINFIG (192 aa)).

Belongs to the binding-protein-dependent transport system permease family. As to quaternary structure, the complex is composed of two ATP-binding proteins (BOV_A0347 and BOV_A0348), two transmembrane proteins (BOV_A0350 and BOV_A0351) and a solute-binding protein (BOV_A0352).

The protein localises to the cell inner membrane. Probably part of an ABC transporter complex that could be involved in peptide import. Probably responsible for the translocation of the substrate across the membrane. This Brucella ovis (strain ATCC 25840 / 63/290 / NCTC 10512) protein is Putative peptide permease protein BOV_A0350.